The primary structure comprises 459 residues: ATP synthase subunit beta (459 aa).

Glycine 149–threonine 156 is an ATP binding site.

It belongs to the ATPase alpha/beta chains family. As to quaternary structure, F-type ATPases have 2 components, CF(1) - the catalytic core - and CF(0) - the membrane proton channel. CF(1) has five subunits: alpha(3), beta(3), gamma(1), delta(1), epsilon(1). CF(0) has three main subunits: a(1), b(2) and c(9-12). The alpha and beta chains form an alternating ring which encloses part of the gamma chain. CF(1) is attached to CF(0) by a central stalk formed by the gamma and epsilon chains, while a peripheral stalk is formed by the delta and b chains.

It localises to the cell inner membrane. It catalyses the reaction ATP + H2O + 4 H(+)(in) = ADP + phosphate + 5 H(+)(out). Produces ATP from ADP in the presence of a proton gradient across the membrane. The catalytic sites are hosted primarily by the beta subunits. The protein is ATP synthase subunit beta of Pseudomonas syringae pv. tomato (strain ATCC BAA-871 / DC3000).